A 233-amino-acid polypeptide reads, in one-letter code: Bcl-2-like protein 1 (233 aa).

The BH4 signature appears at 4-24 (SNRELVVDFLSYKLSQKGYSW). Residues 27-73 (FSDVEENRTEAPEETEAERETPSAINGNPSWHLADSPAVNGATGHSS) are disordered. Ser49 bears the Phosphoserine; by PLK3 mark. Ser62 is modified (phosphoserine; by CDK1). A BH3 motif is present at residues 86 to 100 (VKQALREAGDEFELR). A BH1 motif is present at residues 129 to 148 (ELFRDGVNWGRIVAFFSFGG). The short motif at 180–195 (PWIQENGGWDTFVDLY) is the BH2 element. A helical transmembrane segment spans residues 210–226 (FNRWFLTGMTVAGVVLL).

The protein belongs to the Bcl-2 family. As to quaternary structure, homodimer. Interacts with BAD. Interacts with PGAM5. Interacts with HEBP2. Interacts with p53/TP53 and BBC3; interaction with BBC3 disrupts the interaction with p53/TP53. Interacts with ATP5F1A and ATP5F1B; the interactions mediate the association of isoform Bcl-X(L) with the mitochondrial membrane ATP synthase F(1)F(0) ATP synthase. Interacts with VDAC1. Interacts with BCL2L11 (via BH3). Interacts with RNF183. Interacts with GIMAP3/IAN4 and GIMAP5/IAN5. Interacts with GIMAP5 and HSPA8/HSC70; the interaction between HSPA8 and BCL2L1 is impaired in the absence of GIMAP5. Interacts with isoform 4 of CLU; this interaction releases and activates BAX and promotes cell death. In terms of assembly, forms heterodimers with BAX, BAK or BCL2; heterodimerization with BAX does not seem to be required for anti-apoptotic activity. Interacts with isoform 1 of SIVA1; the interaction inhibits the anti-apoptotic activity. Interacts with IKZF3. Interacts with RTL10/BOP. Interacts with DNM1L and CLTA; DNM1L and BCL2L1 isoform BCL-X(L) may form a complex in synaptic vesicles that also contains clathrin and MFF. Interacts (via the loop between motifs BH4 and BH3) with NLRP1 (via LRR repeats), but not with NLRP2, NLRP3, NLRP4, PYCARD, nor MEFV. Interacts with BECN1. Post-translationally, proteolytically cleaved by caspases during apoptosis. The cleaved protein, lacking the BH4 motif, has pro-apoptotic activity. In terms of processing, phosphorylated on Ser-62 by CDK1. This phosphorylation is partial in normal mitotic cells, but complete in G2-arrested cells upon DNA-damage, thus promoting subsequent apoptosis probably by triggering caspases-mediated proteolysis. Phosphorylated by PLK3, leading to regulate the G2 checkpoint and progression to cytokinesis during mitosis. Phosphorylation at Ser-49 appears during the S phase and G2, disappears rapidly in early mitosis during prometaphase, metaphase and early anaphase, and re-appears during telophase and cytokinesis. Ubiquitinated by RNF183 during prolonged ER stress, leading to degradation by the proteosome. Widely expressed, with highest levels in the brain, thymus, bone marrow, and kidney. Bcl-X(L) and Bcl-X(delta-TM) expression is enhanced in B- and T-lymphocytes that have been activated.

Its subcellular location is the mitochondrion membrane. It is found in the nucleus membrane. The protein resides in the cytoplasm. The protein localises to the cytoskeleton. It localises to the microtubule organizing center. Its subcellular location is the centrosome. It is found in the mitochondrion inner membrane. The protein resides in the mitochondrion outer membrane. The protein localises to the mitochondrion matrix. It localises to the cytoplasmic vesicle. Its subcellular location is the secretory vesicle. It is found in the synaptic vesicle membrane. The protein resides in the cytosol. In terms of biological role, potent inhibitor of cell death. Inhibits activation of caspases. Appears to regulate cell death by blocking the voltage-dependent anion channel (VDAC) by binding to it and preventing the release of the caspase activator, CYC1, from the mitochondrial membrane. Also acts as a regulator of G2 checkpoint and progression to cytokinesis during mitosis. Its function is as follows. Isoform Bcl-X(L) also regulates presynaptic plasticity, including neurotransmitter release and recovery, number of axonal mitochondria as well as size and number of synaptic vesicle clusters. During synaptic stimulation, increases ATP availability from mitochondria through regulation of mitochondrial membrane ATP synthase F(1)F(0) activity and regulates endocytic vesicle retrieval in hippocampal neurons through association with DMN1L and stimulation of its GTPase activity in synaptic vesicles. May attenuate inflammation impairing NLRP1-inflammasome activation, hence CASP1 activation and IL1B release. Isoform Bcl-X(S) promotes apoptosis. This Mus musculus (Mouse) protein is Bcl-2-like protein 1 (Bcl2l1).